Consider the following 241-residue polypeptide: Probable transcriptional regulatory protein CV_3123 (241 aa).

This sequence belongs to the TACO1 family.

The protein resides in the cytoplasm. The polypeptide is Probable transcriptional regulatory protein CV_3123 (Chromobacterium violaceum (strain ATCC 12472 / DSM 30191 / JCM 1249 / CCUG 213 / NBRC 12614 / NCIMB 9131 / NCTC 9757 / MK)).